Here is a 358-residue protein sequence, read N- to C-terminus: MLYHLLYPLAGDVKLFNIFKYLTFRTIYAMITALLVCFVLGPWVIRVLEGLQARQVIRTDGPESHLQKQGTPTMGGVMILAAIVIPTLLWADLSNQYIWTVLFITIGYGLIGFVDDYKKVVEKNPKGLSPRQKMFWQVLLAGAVGTFLFLKPGFNAQLFVPFFKNFHPDLWFWYIPFVTLVIVGASNAVNLTDGLDGLAIGPVAINAATYMLFSYVAGHATLSAYLQVPRVAGAGELAVLCGAMVGAGLGFLWYNSYPAEVFMGDVGSLSLGGTLGAIAVITKQEILLVIVGGIFVIEALSVIFQVGSYKYRGKRIFRMAPIHHHFELKGVAEPKIIVRFWIITIILALVAISTLKMR.

Helical transmembrane passes span 27 to 47 (IYAM…VIRV), 73 to 93 (TMGG…WADL), 97 to 117 (YIWT…VDDY), 134 to 154 (MFWQ…KPGF), 170 to 190 (LWFW…NAVN), 197 to 217 (GLAI…SYVA), 233 to 253 (GAGE…GFLW), 261 to 281 (VFMG…IAVI), 286 to 306 (ILLV…IFQV), and 335 to 355 (KIIV…ISTL).

The protein belongs to the glycosyltransferase 4 family. MraY subfamily. Mg(2+) is required as a cofactor.

The protein resides in the cell inner membrane. The enzyme catalyses UDP-N-acetyl-alpha-D-muramoyl-L-alanyl-gamma-D-glutamyl-meso-2,6-diaminopimeloyl-D-alanyl-D-alanine + di-trans,octa-cis-undecaprenyl phosphate = di-trans,octa-cis-undecaprenyl diphospho-N-acetyl-alpha-D-muramoyl-L-alanyl-D-glutamyl-meso-2,6-diaminopimeloyl-D-alanyl-D-alanine + UMP. Its pathway is cell wall biogenesis; peptidoglycan biosynthesis. Its function is as follows. Catalyzes the initial step of the lipid cycle reactions in the biosynthesis of the cell wall peptidoglycan: transfers peptidoglycan precursor phospho-MurNAc-pentapeptide from UDP-MurNAc-pentapeptide onto the lipid carrier undecaprenyl phosphate, yielding undecaprenyl-pyrophosphoryl-MurNAc-pentapeptide, known as lipid I. This Pelobacter propionicus (strain DSM 2379 / NBRC 103807 / OttBd1) protein is Phospho-N-acetylmuramoyl-pentapeptide-transferase.